The primary structure comprises 141 residues: Thioredoxin-like protein SkfH (141 aa).

Residues 2 to 141 (KDEQMLTEWP…DKMLKKIAGL (140 aa)) form the Thioredoxin domain. Cysteines 41 and 44 form a disulfide.

In terms of biological role, required for production of the bacteriocin SkfA. The polypeptide is Thioredoxin-like protein SkfH (Bacillus subtilis (strain 168)).